Here is a 295-residue protein sequence, read N- to C-terminus: Glycine--tRNA ligase alpha subunit (295 aa).

The protein belongs to the class-II aminoacyl-tRNA synthetase family. As to quaternary structure, tetramer of two alpha and two beta subunits.

Its subcellular location is the cytoplasm. The enzyme catalyses tRNA(Gly) + glycine + ATP = glycyl-tRNA(Gly) + AMP + diphosphate. This chain is Glycine--tRNA ligase alpha subunit, found in Desulforamulus reducens (strain ATCC BAA-1160 / DSM 100696 / MI-1) (Desulfotomaculum reducens).